The sequence spans 184 residues: Ribosome-recycling factor (184 aa).

The protein belongs to the RRF family.

It is found in the cytoplasm. Functionally, responsible for the release of ribosomes from messenger RNA at the termination of protein biosynthesis. May increase the efficiency of translation by recycling ribosomes from one round of translation to another. This Clostridium botulinum (strain Loch Maree / Type A3) protein is Ribosome-recycling factor.